A 66-amino-acid polypeptide reads, in one-letter code: Conotoxin Bu1.4 (66 aa).

The first 23 residues, 1–23 (MGMRMRMMFTVFLLVVLANTVVS), serve as a signal peptide directing secretion. Residues 24-46 (FPSDRDSDGADAEASDEPVEFER) constitute a propeptide that is removed on maturation. The disordered stretch occupies residues 25–48 (PSDRDSDGADAEASDEPVEFERDE). Acidic residues predominate over residues 32 to 42 (GADAEASDEPV). 2 cysteine pairs are disulfide-bonded: C51/C57 and C52/C62. T63 bears the Threonine amide mark.

The protein belongs to the conotoxin A superfamily. In terms of tissue distribution, expressed by the venom duct.

The protein resides in the secreted. This Conus bullatus (Bubble cone) protein is Conotoxin Bu1.4.